We begin with the raw amino-acid sequence, 264 residues long: Taurine import ATP-binding protein TauB (264 aa).

One can recognise an ABC transporter domain in the interval 4-233 (LQLERISAQY…RYAAGESARA (230 aa)). ATP is bound at residue 38 to 45 (GPSGSGKT).

It belongs to the ABC transporter superfamily. Taurine importer (TC 3.A.1.17.1) family. As to quaternary structure, the complex is composed of two ATP-binding proteins (TauB), two transmembrane proteins (TauC) and a solute-binding protein (TauA).

It is found in the cell inner membrane. The enzyme catalyses taurine(out) + ATP + H2O = taurine(in) + ADP + phosphate + H(+). Its function is as follows. Part of the ABC transporter complex TauABC involved in taurine import. Responsible for energy coupling to the transport system. This is Taurine import ATP-binding protein TauB from Pseudomonas fluorescens (strain Pf0-1).